A 95-amino-acid chain; its full sequence is Large ribosomal subunit protein uL23 (95 aa).

It belongs to the universal ribosomal protein uL23 family. As to quaternary structure, part of the 50S ribosomal subunit. Contacts protein L29, and trigger factor when it is bound to the ribosome.

Functionally, one of the early assembly proteins it binds 23S rRNA. One of the proteins that surrounds the polypeptide exit tunnel on the outside of the ribosome. Forms the main docking site for trigger factor binding to the ribosome. The polypeptide is Large ribosomal subunit protein uL23 (Rubrobacter xylanophilus (strain DSM 9941 / JCM 11954 / NBRC 16129 / PRD-1)).